Here is a 578-residue protein sequence, read N- to C-terminus: Oxygen sensor histidine kinase response regulator DevS/DosS (578 aa).

2 consecutive GAF domains span residues aspartate 63 to valine 200 and glutamate 231 to tryptophan 369. Histidine 149 provides a ligand contact to heme. A Histidine kinase domain is found at valine 383–glutamine 578. Phosphohistidine; by autocatalysis is present on histidine 395.

The cofactor is Mg(2+). Heme serves as cofactor.

It localises to the cytoplasm. It carries out the reaction ATP + protein L-histidine = ADP + protein N-phospho-L-histidine.. Functionally, member of the two-component regulatory system DevR/DevS (DosR/DosS) involved in onset of the dormancy response. Regulates an approximately 48-member regulon. Required for full induction of the DevR (DosR) regulon; acts later than DosT to positively regulate expression of the DevR regulon during adaptation to anaerobiosis. Characterized as an oxygen sensor; O(2) acts as a switch, with O(2)-bound Fe(2+) protein inactive in autophosphorylation. Has also been suggested to act as a redox sensor, or perhaps as a dual oxygen/redox sensor. Donates a phosphate group to transcriptional regulator DevR (DosR). This is Oxygen sensor histidine kinase response regulator DevS/DosS (devS) from Mycobacterium tuberculosis (strain CDC 1551 / Oshkosh).